A 393-amino-acid polypeptide reads, in one-letter code: Cysteine protease ATG4B (393 aa).

The residue at position 1 (Met-1) is an N-acetylmethionine. Position 34 is a phosphoserine (Ser-34). Cys-74 functions as the Nucleophile in the catalytic mechanism. At Cys-189 the chain carries S-nitrosocysteine. Catalysis depends on residues Asp-278 and His-280. Cys-292 and Cys-301 each carry S-nitrosocysteine. The cysteines at positions 292 and 361 are disulfide-linked. A phosphoserine mark is found at Ser-316 and Ser-383. The short motif at 388-391 (FEIL) is the LIR element. Residue Ser-392 is modified to Phosphoserine.

Belongs to the peptidase C54 family. Interacts with PFKP; promoting phosphorylation of ATG4B at Ser-34. Interacts with GBP7. Phosphorylation at Ser-383 and Ser-392 promotes autophagy by increasing protein delipidation activity without affecting proteolytic activation of ATG8 proteins. Phosphorylation at Ser-316 by ULK1 inhibits autophagy by decreasing both proteolytic activation and delipidation activities. Phosphorylation at Ser-316 is dephosphorylated by protein phosphatase 2A (PP2A). Phosphorylation at Ser-34 by AKT2 promotes its hydrolase activity, leading to increased proteolytic activation and delipidation of ATG8 family proteins. Phosphorylation at Ser-34 by AKT1 promotes mitochondrial localization and inhibition of the F1F0-ATP synthase activity, leading to elevation of mitochondrial reactive oxygen species (ROS). In terms of processing, ubiquitinated by RNF5, leading to its degradation by the proteasome. Post-translationally, S-nitrosylation in response to high glucose decreases both proteolytic activation and delipidation activities. O-glycosylated by OGT, leading to increase protease activity, thereby promoting the proteolytic activation of ATG8 family proteins. In terms of processing, forms reversible intrachain disulfide bonds in response to oxidative stress. Forms interchain disulfide bonds, leading to formation of homooligomers in response to oxidation.

It localises to the cytoplasm. It is found in the cytosol. The protein resides in the cytoplasmic vesicle. The protein localises to the autophagosome. Its subcellular location is the endoplasmic reticulum. It localises to the mitochondrion. It carries out the reaction [protein]-C-terminal L-amino acid-glycyl-phosphatidylethanolamide + H2O = [protein]-C-terminal L-amino acid-glycine + a 1,2-diacyl-sn-glycero-3-phosphoethanolamine. The catalysed reaction is [protein]-C-terminal L-amino acid-glycyl-phosphatidylserine + H2O = [protein]-C-terminal L-amino acid-glycine + a 1,2-diacyl-sn-glycero-3-phospho-L-serine. With respect to regulation, inhibited by N-ethylmaleimide. Redox-regulated during autophagy since reducing conditions activate ATG4A whereas an oxidizing environment such as the presence of H(2)O(2) inhibits its activity. The cysteine protease activity compounds is inhibited by styrylquinoline compounds 4-28 and LV-320. In terms of biological role, cysteine protease that plays a key role in autophagy by mediating both proteolytic activation and delipidation of ATG8 family proteins. Required for canonical autophagy (macroautophagy), non-canonical autophagy as well as for mitophagy. The protease activity is required for proteolytic activation of ATG8 family proteins: cleaves the C-terminal amino acid of ATG8 proteins MAP1LC3A, MAP1LC3B, MAP1LC3C, GABARAPL1, GABARAPL2 and GABARAP, to reveal a C-terminal glycine. Exposure of the glycine at the C-terminus is essential for ATG8 proteins conjugation to phosphatidylethanolamine (PE) and insertion to membranes, which is necessary for autophagy. Protease activity is also required to counteract formation of high-molecular weight conjugates of ATG8 proteins (ATG8ylation): acts as a deubiquitinating-like enzyme that removes ATG8 conjugated to other proteins, such as ATG3. In addition to the protease activity, also mediates delipidation of ATG8 family proteins. Catalyzes delipidation of PE-conjugated forms of ATG8 proteins during macroautophagy. Also involved in non-canonical autophagy, a parallel pathway involving conjugation of ATG8 proteins to single membranes at endolysosomal compartments, by catalyzing delipidation of ATG8 proteins conjugated to phosphatidylserine (PS). Compared to other members of the family (ATG4A, ATG4C or ATG4C), constitutes the major protein for proteolytic activation of ATG8 proteins, while it displays weaker delipidation activity than other ATG4 paralogs. Involved in phagophore growth during mitophagy independently of its protease activity and of ATG8 proteins: acts by regulating ATG9A trafficking to mitochondria and promoting phagophore-endoplasmic reticulum contacts during the lipid transfer phase of mitophagy. This is Cysteine protease ATG4B from Rattus norvegicus (Rat).